Consider the following 347-residue polypeptide: uncharacterized protein (347 aa).

It is found in the cytoplasm. It localises to the nucleus. This is an uncharacterized protein from Schizosaccharomyces pombe (strain 972 / ATCC 24843) (Fission yeast).